We begin with the raw amino-acid sequence, 382 residues long: Galactokinase (382 aa).

34–37 (EHTD) contacts substrate. 124–130 (GAGLSSS) contacts ATP. Mg(2+) contacts are provided by serine 130 and glutamate 162. Aspartate 174 acts as the Proton acceptor in catalysis. Tyrosine 223 contributes to the substrate binding site.

Belongs to the GHMP kinase family. GalK subfamily.

Its subcellular location is the cytoplasm. The catalysed reaction is alpha-D-galactose + ATP = alpha-D-galactose 1-phosphate + ADP + H(+). Its pathway is carbohydrate metabolism; galactose metabolism. Its function is as follows. Catalyzes the transfer of the gamma-phosphate of ATP to D-galactose to form alpha-D-galactose-1-phosphate (Gal-1-P). The chain is Galactokinase from Escherichia coli O17:K52:H18 (strain UMN026 / ExPEC).